A 152-amino-acid chain; its full sequence is Outer membrane protein assembly factor BamE (152 aa).

The N-terminal stretch at 1-32 (MIDQNHDSEEQAQMQKLTRTVTLTVALTLVSG) is a signal peptide. A lipid anchor (N-palmitoyl cysteine) is attached at Cys33. A lipid anchor (S-diacylglycerol cysteine) is attached at Cys33. Positions 114 to 152 (IDRHGDFSRPPSVADERGIGPTDSTNARGNLLNARPDDE) are disordered.

It belongs to the BamE family. Part of the Bam complex.

Its subcellular location is the cell outer membrane. Functionally, part of the outer membrane protein assembly complex, which is involved in assembly and insertion of beta-barrel proteins into the outer membrane. In Halomonas elongata (strain ATCC 33173 / DSM 2581 / NBRC 15536 / NCIMB 2198 / 1H9), this protein is Outer membrane protein assembly factor BamE.